We begin with the raw amino-acid sequence, 459 residues long: Protein U54 (459 aa).

Positions 1–20 (MQPATLQWSSYVLQLRLTTA) are cleaved as a signal peptide. Residues Asn76, Asn100, Asn281, Asn321, and Asn452 are each glycosylated (N-linked (GlcNAc...) asparagine; by host).

This sequence belongs to the herpesviridae UL82 family.

The sequence is that of Protein U54 (U54) from Homo sapiens (Human).